Here is a 370-residue protein sequence, read N- to C-terminus: Aminomethyltransferase (370 aa).

The protein belongs to the GcvT family. The glycine cleavage system is composed of four proteins: P, T, L and H.

The enzyme catalyses N(6)-[(R)-S(8)-aminomethyldihydrolipoyl]-L-lysyl-[protein] + (6S)-5,6,7,8-tetrahydrofolate = N(6)-[(R)-dihydrolipoyl]-L-lysyl-[protein] + (6R)-5,10-methylene-5,6,7,8-tetrahydrofolate + NH4(+). In terms of biological role, the glycine cleavage system catalyzes the degradation of glycine. This Prochlorococcus marinus (strain MIT 9301) protein is Aminomethyltransferase.